A 390-amino-acid chain; its full sequence is Pyruvate dehydrogenase E1 component subunit alpha, somatic form, mitochondrial (390 aa).

Residues 1-29 (MRKMLAAVSRVLAGAAQKPASRVLVASRN) constitute a mitochondrion transit peptide. Lysine 63 bears the N6-acetyllysine; alternate mark. Lysine 63 carries the post-translational modification N6-succinyllysine; alternate. Residues histidine 92, tyrosine 118, arginine 119, alanine 157, glycine 165, valine 167, aspartate 196, glycine 197, alanine 198, asparagine 225, and tyrosine 227 each coordinate pyruvate. Thiamine diphosphate contacts are provided by tyrosine 118 and arginine 119. Thiamine diphosphate contacts are provided by glycine 165, valine 167, aspartate 196, glycine 197, alanine 198, and asparagine 225. Mg(2+) is bound at residue aspartate 196. Residues asparagine 225 and tyrosine 227 each coordinate Mg(2+). Serine 232 carries the phosphoserine; by PDK1 modification. Lysine 244 carries the N6-acetyllysine; alternate modification. Lysine 244 is subject to N6-succinyllysine; alternate. Residue lysine 267 is modified to N6-acetyllysine. Residue lysine 277 is modified to N6-succinyllysine. A thiamine diphosphate-binding site is contributed by histidine 292. Serine 293 is modified (phosphoserine; by PDK1, PDK2, PDK3 and PDK4). A Phosphoserine modification is found at serine 295. Serine 300 is subject to Phosphoserine; by PDK1, PDK2, PDK3 and PDK4. Residue tyrosine 301 is modified to Phosphotyrosine. Residue lysine 313 is modified to N6-acetyllysine; alternate. The residue at position 313 (lysine 313) is an N6-succinyllysine; alternate. Residues lysine 321 and lysine 336 each carry the N6-acetyllysine modification. Lysine 385 is modified (N6-succinyllysine).

In terms of assembly, heterotetramer of two PDHA1 and two PDHB subunits. The heterotetramer interacts with DLAT, and is part of the multimeric pyruvate dehydrogenase complex that contains multiple copies of pyruvate dehydrogenase (E1), dihydrolipoamide acetyltransferase (DLAT, E2) and lipoamide dehydrogenase (DLD, E3). These subunits are bound to an inner core composed of about 48 DLAT and 12 PDHX molecules. Requires thiamine diphosphate as cofactor. Mg(2+) serves as cofactor. Post-translationally, phosphorylation at Ser-232, Ser-293 and Ser-300 by PDK family kinases inactivates the enzyme; for this phosphorylation at a single site is sufficient. Phosphorylation at Ser-293 interferes with access to active site, and thereby inactivates the enzyme. Dephosphorylation at all three sites, i.e. at Ser-232, Ser-293 and Ser-300, is required for reactivation. In terms of processing, acetylation alters the phosphorylation pattern. Deacetylated by SIRT3. As to expression, in all tissues, but in very low amount in testis.

Its subcellular location is the mitochondrion matrix. The enzyme catalyses N(6)-[(R)-lipoyl]-L-lysyl-[protein] + pyruvate + H(+) = N(6)-[(R)-S(8)-acetyldihydrolipoyl]-L-lysyl-[protein] + CO2. With respect to regulation, pyruvate dehydrogenase activity is inhibited by phosphorylation of PDHA1; it is reactivated by dephosphorylation. The pyruvate dehydrogenase complex catalyzes the overall conversion of pyruvate to acetyl-CoA and CO(2), and thereby links the glycolytic pathway to the tricarboxylic cycle. The protein is Pyruvate dehydrogenase E1 component subunit alpha, somatic form, mitochondrial (Pdha1) of Rattus norvegicus (Rat).